The chain runs to 477 residues: MTRQSLWDLSETDVEDGEIRINVGGFKRRLRSHTLLRFPETRLGRLLLCHSREAILELCDDYDDVQREFYFDRNPELFPYVLHFYHTGKLHVMAELCVFSFSQEIEYWGINEFFIDSCCSYSYHGRKVEPEQEKWDEQSDQESTTSSFDEILAFYNDASKFDGQPLGNFRRQLWLALDNPGYSVLSRVFSVLSILVVLGSIITMCLNSLPDFQIPDSQGNPGEDPRFEIVEHFGIAWFTFELVARFAVAPDFLKFFKNALNLIDLMSIVPFYITLVVNLVVESSPTLANLGRVAQVLRLMRIFRILKLARHSTGLRSLGATLKYSYKEVGLLLLYLSVGISIFSVVAYTIEKEENEGLATIPACWWWATVSMTTVGYGDVVPGTTAGKLTASACILAGILVVVLPITLIFNKFSHFYRRQKQLESAMRSCDFGDGMKEVPSVNLRDYYAHKVKSLMASLTNMSRSSPSELSLDDSLH.

Residues 1-184 are Cytoplasmic-facing; the sequence is MTRQSLWDLS…LALDNPGYSV (184 aa). A helical transmembrane segment spans residues 185–206; that stretch reads LSRVFSVLSILVVLGSIITMCL. Residues 207 to 225 lie on the Extracellular side of the membrane; the sequence is NSLPDFQIPDSQGNPGEDP. The helical transmembrane segment at 226–248 threads the bilayer; it reads RFEIVEHFGIAWFTFELVARFAV. The Cytoplasmic portion of the chain corresponds to 249 to 259; the sequence is APDFLKFFKNA. A helical transmembrane segment spans residues 260–280; the sequence is LNLIDLMSIVPFYITLVVNLV. At 281 to 290 the chain is on the extracellular side; sequence VESSPTLANL. Residues 291–311 form a helical; Voltage-sensor membrane-spanning segment; sequence GRVAQVLRLMRIFRILKLARH. Residues 312 to 326 lie on the Cytoplasmic side of the membrane; the sequence is STGLRSLGATLKYSY. The chain crosses the membrane as a helical span at residues 327–348; that stretch reads KEVGLLLLYLSVGISIFSVVAY. At 349-361 the chain is on the extracellular side; the sequence is TIEKEENEGLATI. The helical intramembrane region spans 362–373; the sequence is PACWWWATVSMT. Positions 374–379 match the Selectivity filter motif; that stretch reads TVGYGD. The stretch at 374-381 is an intramembrane region; that stretch reads TVGYGDVV. Over 382-388 the chain is Extracellular; it reads PGTTAGK. A helical transmembrane segment spans residues 389 to 417; that stretch reads LTASACILAGILVVVLPITLIFNKFSHFY. Residues 418–477 lie on the Cytoplasmic side of the membrane; sequence RRQKQLESAMRSCDFGDGMKEVPSVNLRDYYAHKVKSLMASLTNMSRSSPSELSLDDSLH.

This sequence belongs to the potassium channel family. S (TC 1.A.1.2) subfamily. Kv9.2/KCNS2 sub-subfamily. As to quaternary structure, heterotetramer with KCNB1 and KCNB2. Does not form homomultimers. As to expression, detected in brain, lung and in pulmonary arteries.

The protein localises to the cell membrane. Its function is as follows. Potassium channel regulatory subunit that modulate the delayed rectifier voltage-gated potassium channel activity of KCNB1 and KCNB2 by altering their kinetics, expression levels, and shifting the half-inactivation potential to more polarized values. While it does not form functional channels on its own, it can form functional heterotetrameric channels with KCNB1 and KCNB2. Each regulatory subunit has unique regulatory properties that can lead to extensive inhibition, significant changes in kinetics, and/or substantial shifts in the voltage dependencies of the inactivation process. This chain is Delayed-rectifier potassium channel regulatory subunit KCNS2, found in Rattus norvegicus (Rat).